The primary structure comprises 167 residues: tRNA-specific adenosine deaminase (167 aa).

A CMP/dCMP-type deaminase domain is found at 6 to 117 (FSHEYWMRHA…DAKTGAAGSL (112 aa)). Zn(2+) is bound at residue His-57. Residue Glu-59 is the Proton donor of the active site. Zn(2+) contacts are provided by Cys-87 and Cys-90.

It belongs to the cytidine and deoxycytidylate deaminase family. Homodimer. The cofactor is Zn(2+).

It catalyses the reaction adenosine(34) in tRNA + H2O + H(+) = inosine(34) in tRNA + NH4(+). Catalyzes the deamination of adenosine to inosine at the wobble position 34 of tRNA(Arg2). Essential for cell viability. This Escherichia coli (strain K12) protein is tRNA-specific adenosine deaminase.